Reading from the N-terminus, the 109-residue chain is Small ribosomal subunit protein uS17 (109 aa).

Belongs to the universal ribosomal protein uS17 family. Part of the 30S ribosomal subunit.

In terms of biological role, one of the primary rRNA binding proteins, it binds specifically to the 5'-end of 16S ribosomal RNA. This chain is Small ribosomal subunit protein uS17, found in Methanococcoides burtonii (strain DSM 6242 / NBRC 107633 / OCM 468 / ACE-M).